The sequence spans 278 residues: MDVQGELAQGKALDVWQAAVDSGSDTHVHGGAKAEMLEGSELVVITAGVPRKPGQSRQDVLSTNLPILDSIMADIKHHAPTATVLVVSNPVDVLTYRAWSVSGQGRDKVFGQAGVLDTARMKCFIAEQTGFSARDITALVLGGHGDSMVPLMRYCQIGSVPLSHFLSSEQIEQIVERTRKGGGEILGLKKTGSACDAPGVAIAQMVDAIANGRNRILPAVAILEGEYGRTDIAMGVPCVLAEKGLARIIELPLDAQEQAMFDHSADQVARDIAEMKAL.

Residues arginine 51 and arginine 57 each coordinate substrate. Residues asparagine 64 and 87-89 (VSN) contribute to the NAD(+) site. The substrate site is built by asparagine 89 and arginine 120. The active-site Proton acceptor is the histidine 144.

Belongs to the LDH/MDH superfamily.

It carries out the reaction (S)-malate + NAD(+) = oxaloacetate + NADH + H(+). Functionally, catalyzes the reversible oxidation of malate to oxaloacetate. This chain is Probable malate dehydrogenase (mdh), found in Pseudomonas putida (strain ATCC 47054 / DSM 6125 / CFBP 8728 / NCIMB 11950 / KT2440).